Consider the following 1792-residue polypeptide: uncharacterized protein (1792 aa).

A compositionally biased stretch (low complexity) spans 1 to 28 (MNNNNNNNNNSNNNNNSNNNNNGNSNNN). 13 disordered regions span residues 1–34 (MNNN…SGKG), 162–187 (TNIS…SHHH), 440–461 (KKRK…NKSS), 544–568 (VIDD…SIIN), 736–777 (NKNK…INSN), 837–979 (TKGK…NDLK), 1044–1071 (VSKS…KEQS), 1084–1106 (NMNN…NDNK), 1160–1215 (TSSG…VLER), 1257–1290 (NITA…NNNG), 1651–1686 (LRSK…GRKK), 1704–1731 (PRKK…NSEK), and 1742–1761 (IENK…NLNN). Residues 169-182 (KQPISSNQHPYQQK) show a composition bias toward polar residues. Residues 550–559 (KRNKKEKKKT) show a composition bias toward basic residues. The span at 741 to 776 (PNNINSNDNNNKNDDNNNNNNKNVDGNNNNNNNINS) shows a compositional bias: low complexity. Over residues 838–847 (KGKKKGRKKK) the composition is skewed to basic residues. Residues 856–873 (NIKEDIKSSKKDKKKDNI) show a composition bias toward basic and acidic residues. The segment covering 874–924 (NDNNNDNNNDNNNDNNNDNNNDNNNDNNNDNNNNNNNNNNNNNNNNNNNHN) has biased composition (low complexity). Residues 943–954 (KKKTRQYRKKSK) show a composition bias toward basic residues. Basic and acidic residues predominate over residues 955-966 (ITNDDNNEKIKQ). The span at 1045-1057 (SKSNIPSSFSSPP) shows a compositional bias: low complexity. Basic and acidic residues-rich tracts occupy residues 1060 to 1071 (TNNKNDIDKEQS), 1088 to 1106 (EKSK…NDNK), and 1166 to 1192 (NKEE…KNVD). Positions 1205-1215 (RKKRKKDVLER) are enriched in basic residues. The span at 1261–1289 (NNNNDNNKNNDNDNNNNNNDNIINNNNNN) shows a compositional bias: low complexity. 2 stretches are compositionally biased toward basic residues: residues 1660–1686 (KEHK…GRKK) and 1704–1717 (PRKK…RKSK).

This is an uncharacterized protein from Plasmodium falciparum (isolate 3D7).